The primary structure comprises 446 residues: Cyclin-T1-1 (446 aa).

It belongs to the cyclin family. Cyclin T subfamily.

The chain is Cyclin-T1-1 (CYCT1-1) from Oryza sativa subsp. japonica (Rice).